The primary structure comprises 156 residues: Small ribosomal subunit protein uS7 (156 aa).

It belongs to the universal ribosomal protein uS7 family. Part of the 30S ribosomal subunit. Contacts proteins S9 and S11.

Functionally, one of the primary rRNA binding proteins, it binds directly to 16S rRNA where it nucleates assembly of the head domain of the 30S subunit. Is located at the subunit interface close to the decoding center, probably blocks exit of the E-site tRNA. The sequence is that of Small ribosomal subunit protein uS7 from Limosilactobacillus fermentum (strain NBRC 3956 / LMG 18251) (Lactobacillus fermentum).